The primary structure comprises 837 residues: Mannosyl-oligosaccharide glucosidase (837 aa).

Residues 1 to 10 are compositionally biased toward basic residues; sequence MARGERRRRA. Over 1–38 the chain is Cytoplasmic; the sequence is MARGERRRRAVPAEGVRTAERAARGGPGRRDGRGGGPR. Residues 1 to 39 form a disordered region; it reads MARGERRRRAVPAEGVRTAERAARGGPGRRDGRGGGPRS. An Endoplasmic reticulum targeting motif is present at residues 3-9; it reads RGERRRR. A compositionally biased stretch (basic and acidic residues) spans 17–33; sequence RTAERAARGGPGRRDGR. Residues 39–59 form a helical; Signal-anchor for type II membrane protein membrane-spanning segment; that stretch reads STAGGVALAVVVLSLALGMSG. The Lumenal segment spans residues 60–837; it reads RWVLAWYRAR…LVLLAMAEDY (778 aa). Residues 76 to 137 form a required for endoplasmic reticulum targeting region; sequence SAPPVLPADS…PGTPKLRHTC (62 aa). The active-site Proton donor is D583. N-linked (GlcNAc...) asparagine glycosylation occurs at N657. Residue E807 is the Proton acceptor of the active site.

This sequence belongs to the glycosyl hydrolase 63 family.

It is found in the endoplasmic reticulum membrane. It catalyses the reaction N(4)-(alpha-D-Glc-(1-&gt;2)-alpha-D-Glc-(1-&gt;3)-alpha-D-Glc-(1-&gt;3)-alpha-D-Man-(1-&gt;2)-alpha-D-Man-(1-&gt;2)-alpha-D-Man-(1-&gt;3)-[alpha-D-Man-(1-&gt;2)-alpha-D-Man-(1-&gt;3)-[alpha-D-Man-(1-&gt;2)-alpha-D-Man-(1-&gt;6)]-alpha-D-Man-(1-&gt;6)]-beta-D-Man-(1-&gt;4)-beta-D-GlcNAc-(1-&gt;4)-beta-D-GlcNAc)-L-asparaginyl-[protein] + H2O = N(4)-(alpha-D-Glc-(1-&gt;3)-alpha-D-Glc-(1-&gt;3)-alpha-D-Man-(1-&gt;2)-alpha-D-Man-(1-&gt;2)-alpha-D-Man-(1-&gt;3)-[alpha-D-Man-(1-&gt;2)-alpha-D-Man-(1-&gt;3)-[alpha-D-Man-(1-&gt;2)-alpha-D-Man-(1-&gt;6)]-alpha-D-Man-(1-&gt;6)]-beta-D-Man-(1-&gt;4)-beta-D-GlcNAc-(1-&gt;4)-beta-D-GlcNAc)-L-asparaginyl-[protein] + beta-D-glucose. It functions in the pathway glycan metabolism; N-glycan degradation. With respect to regulation, inhibited by 1-deoxynojirimycin (40% inhibition) and N,N-dimethyl-deoxynojirimycin (85% inhibition). In the context of N-glycan degradation, cleaves the distal alpha 1,2-linked glucose residue from the Glc(3)Man(9)GlcNAc(2) oligosaccharide precursor in a highly specific manner. This chain is Mannosyl-oligosaccharide glucosidase, found in Homo sapiens (Human).